The following is a 409-amino-acid chain: DNA double-strand break repair protein Mre11 (409 aa).

Asp9, His11, Asp50, and Glu85 together coordinate Mn(2+). His86 acts as the Proton donor in catalysis. Mn(2+) contacts are provided by His170, His199, and His201.

This sequence belongs to the MRE11/RAD32 family. Homodimer. Forms a heterotetramer composed of two Mre11 subunits and two Rad50 subunits. It depends on Mn(2+) as a cofactor.

Its activity is regulated as follows. Nuclease activity is regulated by Rad50. Part of the Rad50/Mre11 complex, which is involved in the early steps of DNA double-strand break (DSB) repair. The complex may facilitate opening of the processed DNA ends to aid in the recruitment of HerA and NurA. Mre11 binds to DSB ends and has both double-stranded 3'-5' exonuclease activity and single-stranded endonuclease activity. The polypeptide is DNA double-strand break repair protein Mre11 (Aeropyrum pernix (strain ATCC 700893 / DSM 11879 / JCM 9820 / NBRC 100138 / K1)).